The sequence spans 372 residues: Heat shock 70 kDa protein II (372 aa).

The protein belongs to the heat shock protein 70 family.

In Paracentrotus lividus (Common sea urchin), this protein is Heat shock 70 kDa protein II (HSP70II).